Here is a 332-residue protein sequence, read N- to C-terminus: Ferredoxin--NADP reductase 2 (332 aa).

FAD contacts are provided by Glu-37, Gln-45, Tyr-50, Val-90, Phe-124, Asp-285, and Thr-326.

Belongs to the ferredoxin--NADP reductase type 2 family. Homodimer. FAD serves as cofactor.

The enzyme catalyses 2 reduced [2Fe-2S]-[ferredoxin] + NADP(+) + H(+) = 2 oxidized [2Fe-2S]-[ferredoxin] + NADPH. The protein is Ferredoxin--NADP reductase 2 of Bacillus licheniformis (strain ATCC 14580 / DSM 13 / JCM 2505 / CCUG 7422 / NBRC 12200 / NCIMB 9375 / NCTC 10341 / NRRL NRS-1264 / Gibson 46).